We begin with the raw amino-acid sequence, 569 residues long: Urease subunit alpha (569 aa).

Ni(2+)-binding residues include H136, H138, and K219. The residue at position 219 (K219) is an N6-carboxylysine. A substrate-binding site is contributed by H221. Ni(2+)-binding residues include H248 and H274. H322 functions as the Proton donor in the catalytic mechanism. D362 is a binding site for Ni(2+).

The protein belongs to the metallo-dependent hydrolases superfamily. Urease alpha subunit family. As to quaternary structure, heterotrimer of UreA (gamma), UreB (beta) and UreC (alpha) subunits. Three heterotrimers associate to form the active enzyme. It depends on Ni cation as a cofactor. Carboxylation allows a single lysine to coordinate two nickel ions.

It is found in the cytoplasm. It carries out the reaction urea + 2 H2O + H(+) = hydrogencarbonate + 2 NH4(+). It participates in nitrogen metabolism; urea degradation; CO(2) and NH(3) from urea (urease route): step 1/1. The sequence is that of Urease subunit alpha from Microcystis aeruginosa (strain NIES-843 / IAM M-2473).